Reading from the N-terminus, the 684-residue chain is Probable pectin methyltransferase QUA2 (684 aa).

Positions 1–35 (MSMPLQRGISGVRVSDSSDDLRDSQMKDKTERARS) are disordered. Topologically, residues 1–86 (MSMPLQRGIS…RHRLMLLFLK (86 aa)) are cytoplasmic. Basic and acidic residues predominate over residues 19-35 (DDLRDSQMKDKTERARS). The chain crosses the membrane as a helical; Signal-anchor for type II membrane protein span at residues 87–107 (ISLVLIVVIALAGSFWWTISI). Over 108–684 (STSSRGHVYH…QKPFTKRQSI (577 aa)) the chain is Lumenal. N-linked (GlcNAc...) asparagine glycosylation is found at Asn161 and Asn476.

The protein belongs to the methyltransferase superfamily. In terms of tissue distribution, ubiquitous.

It is found in the golgi apparatus membrane. Its pathway is glycan metabolism; pectin biosynthesis. May be involved in the synthesis of homogalacturonan. Required for normal cell adhesion and plant development. The protein is Probable pectin methyltransferase QUA2 (QUA2) of Arabidopsis thaliana (Mouse-ear cress).